The following is a 413-amino-acid chain: Serine hydroxymethyltransferase (413 aa).

(6S)-5,6,7,8-tetrahydrofolate is bound by residues L119 and G123–L125. Residue K228 is modified to N6-(pyridoxal phosphate)lysine. E243 serves as a coordination point for (6S)-5,6,7,8-tetrahydrofolate.

This sequence belongs to the SHMT family. Homodimer. The cofactor is pyridoxal 5'-phosphate.

The protein localises to the cytoplasm. It catalyses the reaction (6R)-5,10-methylene-5,6,7,8-tetrahydrofolate + glycine + H2O = (6S)-5,6,7,8-tetrahydrofolate + L-serine. It participates in one-carbon metabolism; tetrahydrofolate interconversion. The protein operates within amino-acid biosynthesis; glycine biosynthesis; glycine from L-serine: step 1/1. Catalyzes the reversible interconversion of serine and glycine with tetrahydrofolate (THF) serving as the one-carbon carrier. This reaction serves as the major source of one-carbon groups required for the biosynthesis of purines, thymidylate, methionine, and other important biomolecules. Also exhibits THF-independent aldolase activity toward beta-hydroxyamino acids, producing glycine and aldehydes, via a retro-aldol mechanism. This chain is Serine hydroxymethyltransferase, found in Thermoanaerobacter pseudethanolicus (strain ATCC 33223 / 39E) (Clostridium thermohydrosulfuricum).